The following is a 252-amino-acid chain: 5'-nucleotidase SurE (252 aa).

A divalent metal cation-binding residues include Asp-8, Asp-9, Ser-39, and Asn-95.

This sequence belongs to the SurE nucleotidase family. Requires a divalent metal cation as cofactor.

Its subcellular location is the cytoplasm. The enzyme catalyses a ribonucleoside 5'-phosphate + H2O = a ribonucleoside + phosphate. Functionally, nucleotidase that shows phosphatase activity on nucleoside 5'-monophosphates. This is 5'-nucleotidase SurE from Clostridium botulinum (strain Okra / Type B1).